We begin with the raw amino-acid sequence, 95 residues long: Small ribosomal subunit protein bS20c (95 aa).

The segment at 76 to 95 is disordered; the sequence is NGSAKKAKLTKRLKEKKISL. Basic residues predominate over residues 80-95; that stretch reads KKAKLTKRLKEKKISL.

The protein belongs to the bacterial ribosomal protein bS20 family.

The protein resides in the plastid. Its subcellular location is the chloroplast. Its function is as follows. Binds directly to 16S ribosomal RNA. In Guillardia theta (Cryptophyte), this protein is Small ribosomal subunit protein bS20c.